The following is an 843-amino-acid chain: Protein P (843 aa).

The terminal protein domain (TP) stretch occupies residues 1–177 (MPLSYQHFRK…FCGSPYSWEQ (177 aa)). Residues 178 to 346 (DLQHGRLVFQ…YCLCHIVNLI (169 aa)) are spacer. Disordered regions lie at residues 220-258 (KSRLGPQPPQGQLAGRPQGGSGSIRARVHPSPWGTVGVE) and 292-319 (SKGHSSSGRAVELHHFPPNSSRSQSQGS). Residues 308 to 319 (PPNSSRSQSQGS) are compositionally biased toward low complexity. The polymerase/reverse transcriptase domain (RT) stretch occupies residues 347-690 (DDWGPCAEHG…YLNLYPVARQ (344 aa)). Residues 357-600 (EHRIRTPRTP…YSLNFMGYVI (244 aa)) enclose the Reverse transcriptase domain. Positions 429, 551, and 552 each coordinate Mg(2+).

Belongs to the hepadnaviridae P protein family.

It carries out the reaction DNA(n) + a 2'-deoxyribonucleoside 5'-triphosphate = DNA(n+1) + diphosphate. The enzyme catalyses Endonucleolytic cleavage to 5'-phosphomonoester.. Its activity is regulated as follows. Activated by host HSP70 and HSP40 in vitro to be able to bind the epsilon loop of the pgRNA. Because deletion of the RNase H region renders the protein partly chaperone-independent, the chaperones may be needed indirectly to relieve occlusion of the RNA-binding site by this domain. Inhibited by several reverse-transcriptase inhibitors: Lamivudine, Adefovir and Entecavir. In terms of biological role, multifunctional enzyme that converts the viral RNA genome into dsDNA in viral cytoplasmic capsids. This enzyme displays a DNA polymerase activity that can copy either DNA or RNA templates, and a ribonuclease H (RNase H) activity that cleaves the RNA strand of RNA-DNA heteroduplexes in a partially processive 3'- to 5'-endonucleasic mode. Neo-synthesized pregenomic RNA (pgRNA) are encapsidated together with the P protein, and reverse-transcribed inside the nucleocapsid. Initiation of reverse-transcription occurs first by binding the epsilon loop on the pgRNA genome, and is initiated by protein priming, thereby the 5'-end of (-)DNA is covalently linked to P protein. Partial (+)DNA is synthesized from the (-)DNA template and generates the relaxed circular DNA (RC-DNA) genome. After budding and infection, the RC-DNA migrates in the nucleus, and is converted into a plasmid-like covalently closed circular DNA (cccDNA). The activity of P protein does not seem to be necessary for cccDNA generation, and is presumably released from (+)DNA by host nuclear DNA repair machinery. This Hepatitis B virus genotype B1 (isolate Japan/Yamagata-2/1998) (HBV-B) protein is Protein P.